The primary structure comprises 118 residues: MHEMSLVTGILSIIQEEMSKNGVNKLQRVKVCYGELTNIVPDSLQFAFKIFTEGTSLEGAILEIEKIPLMLRCSNCLSLFTPEDKQKIFFITCPSCKKEVAYNVETGREFYIQHLEVE.

H2 is a binding site for Ni(2+). Residues C73, C76, C93, and C96 each coordinate Zn(2+).

It belongs to the HypA/HybF family.

In terms of biological role, involved in the maturation of [NiFe] hydrogenases. Required for nickel insertion into the metal center of the hydrogenase. The protein is Hydrogenase maturation factor HypA of Lawsonia intracellularis (strain PHE/MN1-00).